Here is a 773-residue protein sequence, read N- to C-terminus: LON peptidase N-terminal domain and RING finger protein 1 (773 aa).

The disordered stretch occupies residues 1–29; sequence MSSPAVARTSPGGSREMAPAPQGRGRFWE. The stretch at 48–81 is one TPR 1 repeat; that stretch reads WELLLRRGELLALGGHLKGALEAFAAALRRGAPA. The RING-type 1 zinc finger occupies 123–159; the sequence is CLGCRGFLSEPVTVPCGHSYCRRCLRRELRARCRLCR. 3 TPR repeats span residues 212-244, 246-278, and 279-312; these read ARAA…EPSD, IVKI…LPDW, and PEVY…DEDF. The span at 359–370 shows a compositional bias: polar residues; sequence EESQSLNEPSPK. The segment at 359 to 388 is disordered; that stretch reads EESQSLNEPSPKQSEEIPEVTSEPVKGSLN. Phosphoserine is present on Ser431. An RING-type 2 zinc finger spans residues 479-517; that stretch reads CSLCMRLFFEPVTTPCGHSFCKNCLERCLDHAPYCPLCK. Positions 558 to 768 constitute a Lon N-terminal domain; that stretch reads TAELSHLTKN…KIQHILTYFS (211 aa).

This chain is LON peptidase N-terminal domain and RING finger protein 1 (LONRF1), found in Homo sapiens (Human).